A 442-amino-acid chain; its full sequence is Aspartate--tRNA(Asp/Asn) ligase (442 aa).

Glu172 is a binding site for L-aspartate. The tract at residues 194 to 197 (QFYK) is aspartate. Position 216 (Arg216) interacts with L-aspartate. Residues 216 to 218 (RAE), 224 to 226 (RHL), and Glu365 each bind ATP. Residues Glu365 and Thr368 each coordinate Mg(2+). Thr368 and Arg372 together coordinate L-aspartate. 413 to 416 (GLER) serves as a coordination point for ATP.

The protein belongs to the class-II aminoacyl-tRNA synthetase family. Type 2 subfamily. As to quaternary structure, homodimer. The cofactor is Mg(2+).

The protein localises to the cytoplasm. It catalyses the reaction tRNA(Asx) + L-aspartate + ATP = L-aspartyl-tRNA(Asx) + AMP + diphosphate. In terms of biological role, aspartyl-tRNA synthetase with relaxed tRNA specificity since it is able to aspartylate not only its cognate tRNA(Asp) but also tRNA(Asn). Reaction proceeds in two steps: L-aspartate is first activated by ATP to form Asp-AMP and then transferred to the acceptor end of tRNA(Asp/Asn). The polypeptide is Aspartate--tRNA(Asp/Asn) ligase (aspS) (Aeropyrum pernix (strain ATCC 700893 / DSM 11879 / JCM 9820 / NBRC 100138 / K1)).